A 369-amino-acid chain; its full sequence is Chaperone protein DnaJ (369 aa).

The J domain maps to 5–70 (DYYEVLGVGR…NKRAAYDQFG (66 aa)). The CR-type zinc-finger motif lies at 128–206 (GAETQIRIPR…CHGAGWVKRQ (79 aa)). 8 residues coordinate Zn(2+): Cys-141, Cys-144, Cys-158, Cys-161, Cys-180, Cys-183, Cys-194, and Cys-197. CXXCXGXG motif repeat units lie at residues 141–148 (CDTCHGSG), 158–165 (CPTCNGHG), 180–187 (CSHCQGSG), and 194–201 (CGDCHGAG).

This sequence belongs to the DnaJ family. In terms of assembly, homodimer. Requires Zn(2+) as cofactor.

It localises to the cytoplasm. Its function is as follows. Participates actively in the response to hyperosmotic and heat shock by preventing the aggregation of stress-denatured proteins and by disaggregating proteins, also in an autonomous, DnaK-independent fashion. Unfolded proteins bind initially to DnaJ; upon interaction with the DnaJ-bound protein, DnaK hydrolyzes its bound ATP, resulting in the formation of a stable complex. GrpE releases ADP from DnaK; ATP binding to DnaK triggers the release of the substrate protein, thus completing the reaction cycle. Several rounds of ATP-dependent interactions between DnaJ, DnaK and GrpE are required for fully efficient folding. Also involved, together with DnaK and GrpE, in the DNA replication of plasmids through activation of initiation proteins. This is Chaperone protein DnaJ from Nitrosomonas europaea (strain ATCC 19718 / CIP 103999 / KCTC 2705 / NBRC 14298).